A 789-amino-acid chain; its full sequence is Bifunctional purine biosynthetic protein PUR2,5 (789 aa).

Residues 1–428 (MEKINVLVVG…NRTDIAHRAF (428 aa)) are GARS. The region spanning 114 to 321 (KDFMKKHNIP…LLELMLATVE (208 aa)) is the ATP-grasp domain. 140–201 (IANSSHNLVI…EEFLEGDELS (62 aa)) contributes to the ATP binding site. Residues E291 and N293 each coordinate Mg(2+). The tract at residues 438–773 (LTYEDAGVSV…TVYTIGKLVE (336 aa)) is AIRS.

In the N-terminal section; belongs to the GARS family. It in the C-terminal section; belongs to the AIR synthase family. Mg(2+) serves as cofactor. It depends on Mn(2+) as a cofactor.

It is found in the cytoplasm. It localises to the cytosol. The catalysed reaction is 2-formamido-N(1)-(5-O-phospho-beta-D-ribosyl)acetamidine + ATP = 5-amino-1-(5-phospho-beta-D-ribosyl)imidazole + ADP + phosphate + H(+). It catalyses the reaction 5-phospho-beta-D-ribosylamine + glycine + ATP = N(1)-(5-phospho-beta-D-ribosyl)glycinamide + ADP + phosphate + H(+). Its pathway is purine metabolism; IMP biosynthesis via de novo pathway; 5-amino-1-(5-phospho-D-ribosyl)imidazole from N(2)-formyl-N(1)-(5-phospho-D-ribosyl)glycinamide: step 2/2. The protein operates within purine metabolism; IMP biosynthesis via de novo pathway; N(1)-(5-phospho-D-ribosyl)glycinamide from 5-phospho-alpha-D-ribose 1-diphosphate: step 2/2. In terms of biological role, catalyzes the second and fifth step in the 'de novo' purine biosynthesis pathway; contains phosphoribosylamine--glycine ligase (GARS) and phosphoribosylformylglycinamidine cyclo-ligase (AIRS) activities. The protein is Bifunctional purine biosynthetic protein PUR2,5 of Pichia angusta (Yeast).